The chain runs to 316 residues: Cell surface superoxide dismutase [Cu-Zn] 6 (316 aa).

A signal peptide spans 1-18 (MIFIPIIILIYLVSIAAS). Cu cation is bound by residues histidine 78, histidine 80, and histidine 96. Residues histidine 96 and aspartate 119 each coordinate Zn(2+). N-linked (GlcNAc...) asparagine glycosylation is present at asparagine 128. Histidine 159 provides a ligand contact to Cu cation. Asparagine 162 and asparagine 240 each carry an N-linked (GlcNAc...) asparagine glycan. Residues 243–263 (DNVYSPEETRPSDQNKKSHRH) are disordered. The segment covering 249–258 (EETRPSDQNK) has biased composition (basic and acidic residues). Asparagine 278 and asparagine 281 each carry an N-linked (GlcNAc...) asparagine glycan. A lipid anchor (GPI-anchor amidated serine) is attached at serine 288. Residues 289 to 316 (SDCLNDGMMVTGSVFGSLVLGIAAGIFV) constitute a propeptide, removed in mature form.

It belongs to the Cu-Zn superoxide dismutase family. Cu cation is required as a cofactor. It depends on Zn(2+) as a cofactor. In terms of processing, the GPI-anchor is attached to the protein in the endoplasmic reticulum and serves to target the protein to the cell surface. There, the glucosamine-inositol phospholipid moiety is cleaved off and the GPI-modified mannoprotein is covalently attached via its lipidless GPI glycan remnant to the 1,6-beta-glucan of the outer cell wall layer.

The protein localises to the secreted. Its subcellular location is the cell wall. It is found in the membrane. The enzyme catalyses 2 superoxide + 2 H(+) = H2O2 + O2. In terms of biological role, superoxide dismutases serve to convert damaging superoxide radicals, a key form of ROS, to less damaging hydrogen peroxide that can be converted into water by catalase action. May be involved protection against extracellular stress. This Candida albicans (strain SC5314 / ATCC MYA-2876) (Yeast) protein is Cell surface superoxide dismutase [Cu-Zn] 6 (SOD6).